Reading from the N-terminus, the 136-residue chain is Keratin-associated protein 15-1 (136 aa).

The protein belongs to the PMG family. In terms of assembly, interacts with hair keratins.

Its function is as follows. In the hair cortex, hair keratin intermediate filaments are embedded in an interfilamentous matrix, consisting of hair keratin-associated proteins (KRTAP), which are essential for the formation of a rigid and resistant hair shaft through their extensive disulfide bond cross-linking with abundant cysteine residues of hair keratins. The matrix proteins include the high-sulfur and high-glycine-tyrosine keratins. The sequence is that of Keratin-associated protein 15-1 (KRTAP15-1) from Capra hircus (Goat).